We begin with the raw amino-acid sequence, 209 residues long: Ribosomal RNA large subunit methyltransferase E (209 aa).

5 residues coordinate S-adenosyl-L-methionine: Gly63, Trp65, Asp83, Asp99, and Asp124. Lys164 serves as the catalytic Proton acceptor.

This sequence belongs to the class I-like SAM-binding methyltransferase superfamily. RNA methyltransferase RlmE family.

It is found in the cytoplasm. It catalyses the reaction uridine(2552) in 23S rRNA + S-adenosyl-L-methionine = 2'-O-methyluridine(2552) in 23S rRNA + S-adenosyl-L-homocysteine + H(+). In terms of biological role, specifically methylates the uridine in position 2552 of 23S rRNA at the 2'-O position of the ribose in the fully assembled 50S ribosomal subunit. The sequence is that of Ribosomal RNA large subunit methyltransferase E from Pseudoalteromonas translucida (strain TAC 125).